A 385-amino-acid chain; its full sequence is S-type anion channel SLAH1 (385 aa).

Topologically, residues 1–42 (MEIPRQEIHIEIDNSIPSSKEFKTGLADAKPVVLMSALRSLH) are cytoplasmic. Residues 43-65 (AGYFRISLSLCSQALLWKIMIAP) traverse the membrane as a helical segment. The Extracellular segment spans residues 66–81 (ESPSMSHMHSKLPSMA). The helical transmembrane segment at 82-102 (FHLLWYLALVTQVSLCFLYAL) threads the bilayer. The Cytoplasmic portion of the chain corresponds to 103–114 (KCIFFFDKVKEE). A helical membrane pass occupies residues 115–135 (FLHYIGVNYLYAPSISWLLML). Topologically, residues 136-150 (QSAPMMEPNSVLYQT) are extracellular. Residues 151–171 (LFWIFAVPVLTLDIKLYGQWF) traverse the membrane as a helical segment. Topologically, residues 172–176 (TTEKR) are cytoplasmic. Residues 177-197 (FLSMLANPASQVSVIANLVAA) form a helical membrane-spanning segment. Over 198–207 (RGAAEMGWNE) the chain is Extracellular. A helical membrane pass occupies residues 208–228 (CALCMFSLGMVHYLVIFVTLY). Over 229–243 (QRLPGGNNFPAKLRP) the chain is Cytoplasmic. The helical transmembrane segment at 244–264 (IFFLFVAAPAMASLAWNSICG) threads the bilayer. A topological domain (extracellular) is located at residue threonine 265. A helical transmembrane segment spans residues 266 to 286 (FDAVAKMLFFLSLFIFMSLVC). The Cytoplasmic portion of the chain corresponds to 287 to 299 (RPNLFKKSMKRFN). A helical transmembrane segment spans residues 300-320 (VAWWAYSFPLTFLALDSVQYA). The Extracellular segment spans residues 321-330 (QEVKDPVGSG). Residues 331 to 351 (LMLIFSSISVLIFLGMMVLTA) traverse the membrane as a helical segment. Topologically, residues 352 to 385 (ANSNRLLRHDPVLGSATDPKDKQKTLSLNATNQN) are cytoplasmic. The segment at 366–385 (SATDPKDKQKTLSLNATNQN) is disordered. Residues 376-385 (TLSLNATNQN) are compositionally biased toward polar residues.

The protein belongs to the SLAC1 S-type anion channel family. In terms of assembly, homotrimer. Expressed in the vascular systems of root.

It is found in the cell membrane. Its function is as follows. Slow, weak voltage-dependent S-type anion efflux channel involved in maintenance of anion homeostasis. The sequence is that of S-type anion channel SLAH1 (SLAH1) from Arabidopsis thaliana (Mouse-ear cress).